The chain runs to 127 residues: Large ribosomal subunit protein uL24A (127 aa).

Belongs to the universal ribosomal protein uL24 family. Component of the large ribosomal subunit (LSU). Mature yeast ribosomes consist of a small (40S) and a large (60S) subunit. The 40S small subunit contains 1 molecule of ribosomal RNA (18S rRNA) and 33 different proteins (encoded by 57 genes). The large 60S subunit contains 3 rRNA molecules (25S, 5.8S and 5S rRNA) and 46 different proteins (encoded by 81 genes).

The protein localises to the cytoplasm. Component of the ribosome, a large ribonucleoprotein complex responsible for the synthesis of proteins in the cell. The small ribosomal subunit (SSU) binds messenger RNAs (mRNAs) and translates the encoded message by selecting cognate aminoacyl-transfer RNA (tRNA) molecules. The large subunit (LSU) contains the ribosomal catalytic site termed the peptidyl transferase center (PTC), which catalyzes the formation of peptide bonds, thereby polymerizing the amino acids delivered by tRNAs into a polypeptide chain. The nascent polypeptides leave the ribosome through a tunnel in the LSU and interact with protein factors that function in enzymatic processing, targeting, and the membrane insertion of nascent chains at the exit of the ribosomal tunnel. The polypeptide is Large ribosomal subunit protein uL24A (Saccharomyces cerevisiae (strain ATCC 204508 / S288c) (Baker's yeast)).